The following is a 358-amino-acid chain: Aminomethyltransferase (358 aa).

The protein belongs to the GcvT family. In terms of assembly, the glycine cleavage system is composed of four proteins: P, T, L and H.

The enzyme catalyses N(6)-[(R)-S(8)-aminomethyldihydrolipoyl]-L-lysyl-[protein] + (6S)-5,6,7,8-tetrahydrofolate = N(6)-[(R)-dihydrolipoyl]-L-lysyl-[protein] + (6R)-5,10-methylene-5,6,7,8-tetrahydrofolate + NH4(+). Functionally, the glycine cleavage system catalyzes the degradation of glycine. The protein is Aminomethyltransferase of Francisella tularensis subsp. tularensis (strain FSC 198).